Here is an 880-residue protein sequence, read N- to C-terminus: Tyrosine-protein kinase receptor TYRO3 (880 aa).

The N-terminal stretch at 1-28 is a signal peptide; the sequence is MVYPGPPGLIAGLLLAALSLSCVDGAKA. Ig-like C2-type domains are found at residues 29–114 and 125–206; these read LGFV…KSVS and PYFT…AIVE. At 29 to 414 the chain is on the extracellular side; sequence LGFVGHGYNL…QRHPHTRMSW (386 aa). Residues asparagine 37 and asparagine 49 are each glycosylated (N-linked (GlcNAc...) asparagine). An intrachain disulfide couples cysteine 50 to cysteine 103. Asparagine 143 carries an N-linked (GlcNAc...) asparagine glycan. A disulfide bridge connects residues cysteine 146 and cysteine 189. Fibronectin type-III domains follow at residues 213 to 306 and 311 to 401; these read PPFN…TKET and LPQN…SKEE. Residues asparagine 216, asparagine 279, asparagine 351, and asparagine 365 are each glycosylated (N-linked (GlcNAc...) asparagine). The helical transmembrane segment at 415 to 435 threads the bilayer; that stretch reads VPMVLGILTALVTVVAMTLIF. The Cytoplasmic segment spans residues 436 to 880; sequence LRKGRKETRF…MQEEQVVITL (445 aa). Positions 503-774 constitute a Protein kinase domain; it reads FTLGRTLGKG…VDLKQRLEAI (272 aa). ATP is bound by residues 509–517 and lysine 535; that span reads LGKGEFGSV. Catalysis depends on aspartate 640, which acts as the Proton acceptor. Tyrosine 671 carries the phosphotyrosine; by autocatalysis modification. The interval 846 to 880 is disordered; that stretch reads EWSSSAQNGEARGLLHEEEEEEEEEMQEEQVVITL. The span at 862 to 873 shows a compositional bias: acidic residues; it reads EEEEEEEEEMQE.

The protein belongs to the protein kinase superfamily. Tyr protein kinase family. AXL/UFO subfamily. In terms of processing, tyrosine phosphorylated upon receptor stimulation. Detected in brain, spinal cord, intestine, lung, stomach, ovary, testis, skin and eye.

The protein resides in the cell membrane. The catalysed reaction is L-tyrosyl-[protein] + ATP = O-phospho-L-tyrosyl-[protein] + ADP + H(+). In terms of biological role, may be involved in cell adhesion processes, particularly in the central nervous system. The sequence is that of Tyrosine-protein kinase receptor TYRO3 (tyro3) from Xenopus laevis (African clawed frog).